The primary structure comprises 381 residues: Erythronate-4-phosphate dehydrogenase (381 aa).

Residues Ser45 and Thr67 each coordinate substrate. Residues 127 to 128 (QV), Asp147, and Thr176 each bind NAD(+). Arg209 is a catalytic residue. Residue Asp233 coordinates NAD(+). Glu238 is an active-site residue. The active-site Proton donor is His255. NAD(+) is bound at residue Gly258. A substrate-binding site is contributed by Tyr259.

It belongs to the D-isomer specific 2-hydroxyacid dehydrogenase family. PdxB subfamily. As to quaternary structure, homodimer.

It is found in the cytoplasm. It catalyses the reaction 4-phospho-D-erythronate + NAD(+) = (R)-3-hydroxy-2-oxo-4-phosphooxybutanoate + NADH + H(+). It participates in cofactor biosynthesis; pyridoxine 5'-phosphate biosynthesis; pyridoxine 5'-phosphate from D-erythrose 4-phosphate: step 2/5. Its function is as follows. Catalyzes the oxidation of erythronate-4-phosphate to 3-hydroxy-2-oxo-4-phosphonooxybutanoate. In Vibrio cholerae serotype O1 (strain ATCC 39315 / El Tor Inaba N16961), this protein is Erythronate-4-phosphate dehydrogenase.